A 340-amino-acid chain; its full sequence is NADPH dehydrogenase (340 aa).

Ser23–Cys26 serves as a coordination point for FMN. Tyr28 provides a ligand contact to substrate. The FMN site is built by Ala60 and Gln102. His164–His167 provides a ligand contact to substrate. Residues Arg215 and Gly307–Arg308 contribute to the FMN site.

Belongs to the NADH:flavin oxidoreductase/NADH oxidase family. NamA subfamily. Homotetramer. FMN is required as a cofactor.

The catalysed reaction is A + NADPH + H(+) = AH2 + NADP(+). Its function is as follows. Catalyzes the reduction of the double bond of an array of alpha,beta-unsaturated aldehydes and ketones. It also reduces the nitro group of nitroester and nitroaromatic compounds. It could have a role in detoxification processes. The chain is NADPH dehydrogenase from Geobacillus thermodenitrificans (strain NG80-2).